Consider the following 262-residue polypeptide: Adenosylcobinamide-GDP ribazoletransferase (262 aa).

The next 6 helical transmembrane spans lie at 43–63 (YFGL…WLTQ), 66–86 (LPAG…TGGF), 120–140 (GALA…ELAL), 146–166 (AGSA…SLIF), 191–211 (LFIL…IAAL), and 242–262 (AAQQ…GSIL).

It belongs to the CobS family. The cofactor is Mg(2+).

Its subcellular location is the cell inner membrane. The catalysed reaction is alpha-ribazole + adenosylcob(III)inamide-GDP = adenosylcob(III)alamin + GMP + H(+). It catalyses the reaction alpha-ribazole 5'-phosphate + adenosylcob(III)inamide-GDP = adenosylcob(III)alamin 5'-phosphate + GMP + H(+). The protein operates within cofactor biosynthesis; adenosylcobalamin biosynthesis; adenosylcobalamin from cob(II)yrinate a,c-diamide: step 7/7. Joins adenosylcobinamide-GDP and alpha-ribazole to generate adenosylcobalamin (Ado-cobalamin). Also synthesizes adenosylcobalamin 5'-phosphate from adenosylcobinamide-GDP and alpha-ribazole 5'-phosphate. The sequence is that of Adenosylcobinamide-GDP ribazoletransferase from Shewanella sp. (strain ANA-3).